The primary structure comprises 325 residues: D-alanine--D-alanine ligase (325 aa).

Residues 107–311 enclose the ATP-grasp domain; sequence KRLLLSESLP…YEALCVEVLK (205 aa). Position 137–192 (137–192) interacts with ATP; that stretch reads VDTLGLPLIVKPAREGSSLGLSKVTERAAMAAAVALAEKMDADILCEQFISGDEVT. The Mg(2+) site is built by Asp264, Glu278, and Asn280.

Belongs to the D-alanine--D-alanine ligase family. Mg(2+) is required as a cofactor. It depends on Mn(2+) as a cofactor.

The protein localises to the cytoplasm. The enzyme catalyses 2 D-alanine + ATP = D-alanyl-D-alanine + ADP + phosphate + H(+). It participates in cell wall biogenesis; peptidoglycan biosynthesis. Functionally, cell wall formation. The sequence is that of D-alanine--D-alanine ligase from Polaromonas naphthalenivorans (strain CJ2).